An 86-amino-acid polypeptide reads, in one-letter code: Large ribosomal subunit protein bL31B (86 aa).

The protein belongs to the bacterial ribosomal protein bL31 family. Type B subfamily. Part of the 50S ribosomal subunit.

The sequence is that of Large ribosomal subunit protein bL31B from Yersinia pseudotuberculosis serotype O:1b (strain IP 31758).